We begin with the raw amino-acid sequence, 278 residues long: ATPase SWSAP1 (278 aa).

A disordered region spans residues 237–278; that stretch reads SPEKKDSSAGSQSLTLGCDNLPGPGSPLDGILTSETGADSKT. Residues 269–278 are compositionally biased toward polar residues; sequence TSETGADSKT.

As to quaternary structure, interacts with ZSWIM7; they form a functional complex involved in homologous recombination repair and stabilize each other. Interacts with RAD51, RAD51B, RAD51C, RAD51D and XRCC3; involved in homologous recombination repair.

It is found in the nucleus. ATPase which is preferentially stimulated by single-stranded DNA and is involved in homologous recombination repair (HRR). Has a DNA-binding activity which is independent of its ATPase activity. The sequence is that of ATPase SWSAP1 (Swsap1) from Mus musculus (Mouse).